The primary structure comprises 581 residues: Sulfate adenylyltransferase (581 aa).

An N-terminal region spans residues 1–176 (MANAPHGGVL…VQAIQAPTHF (176 aa)). The segment at 177–401 (DYVPLRYTPA…LRESYPPRPQ (225 aa)) is catalytic. Residue glutamine 204 participates in sulfate binding. ATP is bound by residues 204-207 (QTRN) and 298-301 (GRDH). Catalysis depends on residues threonine 205, arginine 206, and asparagine 207. Residue arginine 206 participates in sulfate binding. Position 302 (alanine 302) interacts with sulfate. Methionine 340 provides a ligand contact to ATP. Positions 402–581 (QGFTILLTGL…IMILESQNLV (180 aa)) are allosteric regulation domain; adenylyl-sulfate kinase-like. 3'-phosphoadenylyl sulfate contacts are provided by residues 441–444 (EELR), 486–487 (TA), and arginine 526.

This sequence in the N-terminal section; belongs to the sulfate adenylyltransferase family. The protein in the C-terminal section; belongs to the APS kinase family. As to quaternary structure, homohexamer. Dimer of trimers.

It localises to the cytoplasm. The catalysed reaction is sulfate + ATP + H(+) = adenosine 5'-phosphosulfate + diphosphate. It functions in the pathway sulfur metabolism; hydrogen sulfide biosynthesis; sulfite from sulfate: step 1/3. Its activity is regulated as follows. Allosterically inhibited by 3'-phosphoadenosine 5'-phosphosulfate (PAPS). Its function is as follows. Catalyzes the first intracellular reaction of sulfate assimilation, forming adenosine-5'-phosphosulfate (APS) from inorganic sulfate and ATP. Plays an important role in sulfate activation as a component of the biosynthesis pathway of sulfur-containing amino acids. This chain is Sulfate adenylyltransferase, found in Cryptococcus neoformans var. grubii serotype A (strain H99 / ATCC 208821 / CBS 10515 / FGSC 9487) (Filobasidiella neoformans var. grubii).